The following is a 401-amino-acid chain: MQVSIACTEHNLKSRNGEDRLLSKQSSNAPNVVNAARAKFRTVAIIARSLGTFTPQHHISLKESTAKQTGMKYRNLGKSGLRVSCLGLGTWVTFGGQISDEVAERLMTIAYESGVNLFDTAEVYAAGKAEVILGSIIKKKGWRRSSLVITTKLYWGGKAETERGLSRKHIIEGLKGSLQRLQLEYVDVVFANRPDSNTPMEEIVRAMTHVINQGMAMYWGTSRWSAMEIMEAYSVARQFNMIPPVCEQAEYHLFQREKVEVQLPELYHKIGVGAMTWSPLACGIISGKYGNGVPESSRASLKCYQWLKERIVSEEGRKQQNKLKDLSPIAERLGCTLPQLAVAWCLRNEGVSSVLLGSSTPEQLIENLGAIQVLPKMTSHVVNEIDNILRNKPYSKKDYRS.

Residues Thr90, Trp91, Gln97, and Asp119 each coordinate NADP(+). Tyr124 (proton donor/acceptor) is an active-site residue. Residues Asn192, Ser222, Arg223, Gln248, Trp277, Ser278, Pro279, Leu280, Ala281, Cys282, Lys288, Arg298, Gly357, Ser359, Gln363, Glu366, and Asn367 each coordinate NADP(+).

It belongs to the shaker potassium channel beta subunit family. Homotetramer. Interaction with tetrameric potassium channel alpha subunits gives rise to a heterooctamer. Identified in potassium channel complexes containing KCNA1, KCNA2, KCNA4, KCNA5, KCNA6, KCNAB1 and KCNAB2. Part of a complex containing KCNA1, KCNA4 and LGI1; interaction with LGI1 inhibits down-regulation of KCNA1 channel activity. Interacts with the dimer formed by GNB1 and GNG2; this enhances KCNA1 binding. Interacts with SQSTM. As to expression, detected in brain, in hippocampus and striatum (at protein level). Predominantly expressed in brain. No expression found in heart, skeletal muscle or kidney. In the late embryonic and early neonatal brain, highly expressed in hippocampus, cerebral cortex, caudate putamen, colliculus and cerebellum.

It localises to the cytoplasm. The protein resides in the membrane. The protein localises to the cell membrane. It catalyses the reaction a primary alcohol + NADP(+) = an aldehyde + NADPH + H(+). The catalysed reaction is a secondary alcohol + NADP(+) = a ketone + NADPH + H(+). Its function is as follows. Regulatory subunit of the voltage-gated potassium (Kv) Shaker channels composed of pore-forming and potassium-conducting alpha subunits and of regulatory beta subunits. The beta-1/KCNAB1 cytoplasmic subunit mediates closure of delayed rectifier potassium channels by physically obstructing the pore via its N-terminal domain and increases the speed of channel closure for other family members. Promotes the inactivation of KCNA1, KCNA2, KCNA4, KCNA5 and KCNA6 alpha subunit-containing channels. Displays nicotinamide adenine dinucleotide phosphate (NADPH)-dependent aldoketoreductase activity by catalyzing the NADPH-dependent reduction of a variety of endogenous aldehydes and ketones. The binding of NADPH is required for efficient down-regulation of potassium channel activity. Oxidation of the bound NADPH restrains N-terminal domain from blocking the channel, thereby decreasing N-type inactivation of potassium channel activity. In Mus musculus (Mouse), this protein is Voltage-gated potassium channel subunit beta-1.